The sequence spans 612 residues: UvrABC system protein C (612 aa).

Residues 15–93 (HLPGVYRMYD…IKQHQPKYNV (79 aa)) enclose the GIY-YIG domain. The 36-residue stretch at 203–238 (SQVIDYLMQKMEIAASELDFETAARFRDQIQSVRAV) folds into the UVR domain.

The protein belongs to the UvrC family. Interacts with UvrB in an incision complex.

Its subcellular location is the cytoplasm. Functionally, the UvrABC repair system catalyzes the recognition and processing of DNA lesions. UvrC both incises the 5' and 3' sides of the lesion. The N-terminal half is responsible for the 3' incision and the C-terminal half is responsible for the 5' incision. This chain is UvrABC system protein C, found in Haemophilus ducreyi (strain 35000HP / ATCC 700724).